Here is a 194-residue protein sequence, read N- to C-terminus: Superoxide dismutase [Cu-Zn] (194 aa).

A signal peptide spans 1–20; sequence MTRPLALIIFLVAILTNTDP. Histidine 85 and histidine 104 together coordinate Cu cation. A disulfide bridge links cysteine 96 with cysteine 188. Positions 104, 112, 121, and 124 each coordinate Zn(2+). A Cu cation-binding site is contributed by histidine 162.

This sequence belongs to the Cu-Zn superoxide dismutase family. As to quaternary structure, homodimer. Cu cation is required as a cofactor. Requires Zn(2+) as cofactor.

It catalyses the reaction 2 superoxide + 2 H(+) = H2O2 + O2. In terms of biological role, destroys radicals which are normally produced within the cells and which are toxic to biological systems. The chain is Superoxide dismutase [Cu-Zn] from Ramazzottius varieornatus (Water bear).